A 154-amino-acid polypeptide reads, in one-letter code: Interleukin-2 (154 aa).

An N-terminal signal peptide occupies residues 1–20 (MCKMQLLSCIALSLVLVANS). The O-linked (GalNAc...) threonine glycan is linked to T23. An intrachain disulfide couples C78 to C126.

The protein belongs to the IL-2 family.

Its subcellular location is the secreted. Functionally, cytokine produced by activated CD4-positive helper T-cells and to a lesser extend activated CD8-positive T-cells and natural killer (NK) cells that plays pivotal roles in the immune response and tolerance. Binds to a receptor complex composed of either the high-affinity trimeric IL-2R (IL2RA/CD25, IL2RB/CD122 and IL2RG/CD132) or the low-affinity dimeric IL-2R (IL2RB and IL2RG). Interaction with the receptor leads to oligomerization and conformation changes in the IL-2R subunits resulting in downstream signaling starting with phosphorylation of JAK1 and JAK3. In turn, JAK1 and JAK3 phosphorylate the receptor to form a docking site leading to the phosphorylation of several substrates including STAT5. This process leads to activation of several pathways including STAT, phosphoinositide-3-kinase/PI3K and mitogen-activated protein kinase/MAPK pathways. Functions as a T-cell growth factor and can increase NK-cell cytolytic activity as well. Promotes strong proliferation of activated B-cells and subsequently immunoglobulin production. Plays a pivotal role in regulating the adaptive immune system by controlling the survival and proliferation of regulatory T-cells, which are required for the maintenance of immune tolerance. Moreover, participates in the differentiation and homeostasis of effector T-cell subsets, including Th1, Th2, Th17 as well as memory CD8-positive T-cells. This Mirounga angustirostris (Northern elephant seal) protein is Interleukin-2 (IL2).